We begin with the raw amino-acid sequence, 349 residues long: Glucose 1-dehydrogenase 1 (349 aa).

Residue Cys-39 coordinates Zn(2+). Thr-41 serves as a coordination point for substrate. Zn(2+)-binding residues include His-64 and Glu-65. Residues Glu-110 and Glu-146 each coordinate substrate. Glu-146 provides a ligand contact to Zn(2+). NADP(+)-binding positions include 178 to 181, 260 to 262, and 289 to 291; these read AGPI, LGV, and SVN. Asn-291 provides a ligand contact to substrate.

It belongs to the zinc-containing alcohol dehydrogenase family. Glucose 1-dehydrogenase subfamily. The cofactor is Zn(2+).

The catalysed reaction is D-glucose + NAD(+) = D-glucono-1,5-lactone + NADH + H(+). It carries out the reaction D-glucose + NADP(+) = D-glucono-1,5-lactone + NADPH + H(+). Functionally, catalyzes the NAD(P)(+)-dependent oxidation of D-glucose to D-gluconate via gluconolactone. Can utilize both NAD(+) and NADP(+) as electron acceptor. Is involved in the degradation of glucose through a non-phosphorylative variant of the Entner-Doudoroff pathway. The protein is Glucose 1-dehydrogenase 1 of Caldivirga maquilingensis (strain ATCC 700844 / DSM 13496 / JCM 10307 / IC-167).